Consider the following 160-residue polypeptide: Transcription elongation factor GreA (160 aa).

Positions 12–76 (EGVKKLEEEL…QLENMLKNAS (65 aa)) form a coiled coil.

The protein belongs to the GreA/GreB family.

Necessary for efficient RNA polymerase transcription elongation past template-encoded arresting sites. The arresting sites in DNA have the property of trapping a certain fraction of elongating RNA polymerases that pass through, resulting in locked ternary complexes. Cleavage of the nascent transcript by cleavage factors such as GreA or GreB allows the resumption of elongation from the new 3'terminus. GreA releases sequences of 2 to 3 nucleotides. This chain is Transcription elongation factor GreA, found in Clostridium botulinum (strain Kyoto / Type A2).